A 346-amino-acid polypeptide reads, in one-letter code: Phosphate acyltransferase (346 aa).

It belongs to the PlsX family. In terms of assembly, homodimer. Probably interacts with PlsY.

It is found in the cytoplasm. It catalyses the reaction a fatty acyl-[ACP] + phosphate = an acyl phosphate + holo-[ACP]. The protein operates within lipid metabolism; phospholipid metabolism. Its function is as follows. Catalyzes the reversible formation of acyl-phosphate (acyl-PO(4)) from acyl-[acyl-carrier-protein] (acyl-ACP). This enzyme utilizes acyl-ACP as fatty acyl donor, but not acyl-CoA. In Synechococcus elongatus (strain ATCC 33912 / PCC 7942 / FACHB-805) (Anacystis nidulans R2), this protein is Phosphate acyltransferase.